Here is a 79-residue protein sequence, read N- to C-terminus: uncharacterized protein (79 aa).

This sequence belongs to the asfivirus D79L family.

This is an uncharacterized protein from African swine fever virus (strain Badajoz 1971 Vero-adapted) (Ba71V).